The following is a 400-amino-acid chain: Calsequestrin-2 (400 aa).

Residues 1 to 19 form the signal peptide; that stretch reads MKRTHLFIVGVYVLSSCRA. The residue at position 282 (Y282) is a Phosphotyrosine. Residue N335 is glycosylated (N-linked (GlcNAc...) asparagine). The disordered stretch occupies residues 365–400; it reads VLSGKINTEDDDDEDDDDDNSDEEDNDDSDDDDDDE. Over residues 373–400 the composition is skewed to acidic residues; it reads EDDDDEDDDDDNSDEEDNDDSDDDDDDE.

It belongs to the calsequestrin family. In terms of assembly, monomer, homodimer and homooligomer. Mostly monomeric in the absence of calcium. Forms higher oligomers in a calcium-dependent manner. Dimers associate to form tetramers, that then form linear homomer chains. Interacts with ASPH and TRDN. Post-translationally, phosphorylation in the C-terminus, probably by CK2, moderately increases calcium buffering capacity. N-glycosylated.

The protein localises to the sarcoplasmic reticulum lumen. Calsequestrin is a high-capacity, moderate affinity, calcium-binding protein and thus acts as an internal calcium store in muscle. Calcium ions are bound by clusters of acidic residues at the protein surface, especially at the interface between subunits. Can bind around 60 Ca(2+) ions. Regulates the release of lumenal Ca(2+) via the calcium release channel RYR2; this plays an important role in triggering muscle contraction. Plays a role in excitation-contraction coupling in the heart and in regulating the rate of heart beats. In Pongo abelii (Sumatran orangutan), this protein is Calsequestrin-2 (CASQ2).